A 143-amino-acid polypeptide reads, in one-letter code: Aspartate 1-decarboxylase (143 aa).

The Schiff-base intermediate with substrate; via pyruvic acid role is filled by Ser25. Position 25 is a pyruvic acid (Ser) (Ser25). Thr57 serves as a coordination point for substrate. Tyr58 acts as the Proton donor in catalysis. Position 73 to 75 (73 to 75) interacts with substrate; the sequence is GAA.

It belongs to the PanD family. Heterooctamer of four alpha and four beta subunits. It depends on pyruvate as a cofactor. Post-translationally, is synthesized initially as an inactive proenzyme, which is activated by self-cleavage at a specific serine bond to produce a beta-subunit with a hydroxyl group at its C-terminus and an alpha-subunit with a pyruvoyl group at its N-terminus.

It localises to the cytoplasm. The catalysed reaction is L-aspartate + H(+) = beta-alanine + CO2. It participates in cofactor biosynthesis; (R)-pantothenate biosynthesis; beta-alanine from L-aspartate: step 1/1. Functionally, catalyzes the pyruvoyl-dependent decarboxylation of aspartate to produce beta-alanine. This Mycobacterium ulcerans (strain Agy99) protein is Aspartate 1-decarboxylase.